We begin with the raw amino-acid sequence, 814 residues long: Kexin (814 aa).

The first 19 residues, 1–19 (MKVRKYITLCFWWAFSTSA), serve as a signal peptide directing secretion. The propeptide occupies 20–109 (LVSSQQIPLK…LFPRNDLFKR (90 aa)). N42 is a glycosylation site (N-linked (GlcNAc...) asparagine). The propeptide at 110–113 (LPVP) is removed by dipeptidylpeptidase STE13. At 114-678 (APPMDSSLLP…KLSSPRQAMH (565 aa)) the chain is on the lumenal side. D135 is a Ca(2+) binding site. The Peptidase S8 domain maps to 141–453 (QWHLVNPSFP…FGKIDAHKLI (313 aa)). N163 carries an N-linked (GlcNAc...) asparagine glycan. The active-site Charge relay system is D175. D184 contacts Ca(2+). The Charge relay system role is filled by H213. Positions 227, 277, 320, and 350 each coordinate Ca(2+). 2 cysteine pairs are disulfide-bonded: C230–C377 and C322–C352. The active-site Charge relay system is S385. N404 and N480 each carry an N-linked (GlcNAc...) asparagine glycan. Positions 462 to 596 (VNAQTWFYLP…RLKLFGESID (135 aa)) constitute a P/Homo B domain. Positions 651–671 (PQTTTASTDPDSDPNTPKKLS) are disordered. Low complexity predominate over residues 653-667 (TTTASTDPDSDPNTP). Residues 679 to 699 (YFLTIFLIGATFLVLYFMFFM) traverse the membrane as a helical segment. Residues 700–814 (KSRRRIRRSR…PDVPPSSGRS (115 aa)) are Cytoplasmic-facing. The tract at residues 756–814 (SLSSSENGDAEHTIDSVLTNENPFSDPIKQKFPNDANAESASNKLQELQPDVPPSSGRS) is disordered. Polar residues predominate over residues 792-801 (NAESASNKLQ).

The protein belongs to the peptidase S8 family. Furin subfamily. Requires Ca(2+) as cofactor. In terms of processing, O-glycosylated.

The protein resides in the golgi apparatus. It localises to the trans-Golgi network membrane. It carries out the reaction Cleavage of -Lys-Arg-|-Xaa- and -Arg-Arg-|-Xaa- bonds to process yeast alpha-factor pheromone and killer toxin precursors.. Its function is as follows. Processing of precursors of alpha-factors and killer toxin. The sequence is that of Kexin (KEX2) from Saccharomyces cerevisiae (strain ATCC 204508 / S288c) (Baker's yeast).